A 233-amino-acid polypeptide reads, in one-letter code: Protein Mis18-alpha (233 aa).

A phosphoserine mark is found at serine 36, serine 39, and serine 40. Residues 80-178 (PLVFLCSGCR…SVEAIESYVL (99 aa)) form the Mis18 domain. The Zn(2+) site is built by cysteine 85, cysteine 88, cysteine 141, and cysteine 144. Lysine 162 participates in a covalent cross-link: Glycyl lysine isopeptide (Lys-Gly) (interchain with G-Cter in SUMO2). Serine 233 bears the Phosphoserine mark.

It belongs to the mis18 family. Homodimer, and heterodimer with OIP5/MIS18B. Identified in a complex containing MIS18A, OIP5/MIS18B, MIS18BP1, RBBP7 and RBBP4. Detected in testis.

The protein localises to the nucleus. The protein resides in the chromosome. Its subcellular location is the centromere. In terms of biological role, required for recruitment of CENPA to centromeres and normal chromosome segregation during mitosis. The polypeptide is Protein Mis18-alpha (MIS18A) (Homo sapiens (Human)).